The sequence spans 222 residues: Peptide methionine sulfoxide reductase MsrA (222 aa).

Cysteine 54 is an active-site residue.

Belongs to the MsrA Met sulfoxide reductase family.

The enzyme catalyses L-methionyl-[protein] + [thioredoxin]-disulfide + H2O = L-methionyl-(S)-S-oxide-[protein] + [thioredoxin]-dithiol. It carries out the reaction [thioredoxin]-disulfide + L-methionine + H2O = L-methionine (S)-S-oxide + [thioredoxin]-dithiol. Has an important function as a repair enzyme for proteins that have been inactivated by oxidation. Catalyzes the reversible oxidation-reduction of methionine sulfoxide in proteins to methionine. The sequence is that of Peptide methionine sulfoxide reductase MsrA from Methylococcus capsulatus (strain ATCC 33009 / NCIMB 11132 / Bath).